Here is a 101-residue protein sequence, read N- to C-terminus: Phosphoprotein OPG062 (101 aa).

Positions 50–73 (KPSSPTCERRPSSPSRCERMNNPG) are disordered. The segment covering 56-68 (CERRPSSPSRCER) has biased composition (basic and acidic residues).

It belongs to the orthopoxvirus OPG062 family. In terms of assembly, self-associates to form high molecular-weight forms. Interacts with protein OPG157. Interacts with host RICTOR and RPTOR; these interactions disrupt the mTORC1 and mTORC2 crosstalk.

The protein localises to the virion. Plays an essential role in virion assembly and morphogenesis. Also plays a role in the inhibition of host immune response by dysregulating mTOR. Sequesters host RICTOR and RPTOR, thereby disrupting mTORC1 and mTORC2 crosstalk. In turn, blocks the host antiviral response in part through mTOR-dependent degradation of cGAS, the primary poxvirus sensor. The polypeptide is Phosphoprotein OPG062 (OPG062) (Monkeypox virus).